Reading from the N-terminus, the 375-residue chain is Chaperone protein DnaJ (375 aa).

The region spanning 5–70 (DFYETLGVAK…QKRAAYDRYG (66 aa)) is the J domain. The segment at 136 to 214 (GKTAQIRVPT…CHGQGRVTEE (79 aa)) adopts a CR-type zinc-finger fold. Zn(2+) is bound by residues Cys149, Cys152, Cys166, Cys169, Cys188, Cys191, Cys202, and Cys205. CXXCXGXG motif repeat units lie at residues 149-156 (CDVCSGSG), 166-173 (CGTCQGSG), 188-195 (CPTCHGRG), and 202-209 (CPKCHGQG).

This sequence belongs to the DnaJ family. As to quaternary structure, homodimer. Requires Zn(2+) as cofactor.

It localises to the cytoplasm. Participates actively in the response to hyperosmotic and heat shock by preventing the aggregation of stress-denatured proteins and by disaggregating proteins, also in an autonomous, DnaK-independent fashion. Unfolded proteins bind initially to DnaJ; upon interaction with the DnaJ-bound protein, DnaK hydrolyzes its bound ATP, resulting in the formation of a stable complex. GrpE releases ADP from DnaK; ATP binding to DnaK triggers the release of the substrate protein, thus completing the reaction cycle. Several rounds of ATP-dependent interactions between DnaJ, DnaK and GrpE are required for fully efficient folding. Also involved, together with DnaK and GrpE, in the DNA replication of plasmids through activation of initiation proteins. The chain is Chaperone protein DnaJ from Rhizobium etli (strain CIAT 652).